The primary structure comprises 242 residues: Prosalusin (242 aa).

Residues 1 to 26 (MAAATRSCRPWGSLLGLIWLVSAAAA) form the signal peptide. A propeptide spanning residues 27 to 189 (SWDLSSLRCN…SSWVVYGTNY (163 aa)) is cleaved from the precursor. 93–100 (GWTGTGKS) is an ATP binding site. An N-linked (GlcNAc...) asparagine glycan is attached at N149.

Belongs to the ClpA/ClpB family. Torsin subfamily.

It is found in the secreted. Its function is as follows. Salusin may be a endocrine and/or paracrine factor able to increase intracellular calcium concentrations and induce cell mitogenesis. Salusin may also be a potent hypotensive peptide. This chain is Prosalusin (TOR2A), found in Bos taurus (Bovine).